The following is a 314-amino-acid chain: Malate dehydrogenase (314 aa).

Residues glycine 11–glycine 16 and aspartate 35 contribute to the NAD(+) site. 2 residues coordinate substrate: arginine 84 and arginine 90. Residues asparagine 97 and isoleucine 120 to asparagine 122 contribute to the NAD(+) site. The substrate site is built by asparagine 122 and arginine 153. Histidine 177 (proton acceptor) is an active-site residue.

The protein belongs to the LDH/MDH superfamily. MDH type 3 family.

The enzyme catalyses (S)-malate + NAD(+) = oxaloacetate + NADH + H(+). Catalyzes the reversible oxidation of malate to oxaloacetate. This Rickettsia prowazekii (strain Madrid E) protein is Malate dehydrogenase.